Here is a 177-residue protein sequence, read N- to C-terminus: Large ribosomal subunit protein uL5 (177 aa).

The protein belongs to the universal ribosomal protein uL5 family. In terms of assembly, part of the 50S ribosomal subunit; part of the 5S rRNA/L5/L18/L25 subcomplex. Contacts the 5S rRNA and the P site tRNA. Forms a bridge to the 30S subunit in the 70S ribosome.

Its function is as follows. This is one of the proteins that bind and probably mediate the attachment of the 5S RNA into the large ribosomal subunit, where it forms part of the central protuberance. In the 70S ribosome it contacts protein S13 of the 30S subunit (bridge B1b), connecting the 2 subunits; this bridge is implicated in subunit movement. Contacts the P site tRNA; the 5S rRNA and some of its associated proteins might help stabilize positioning of ribosome-bound tRNAs. The polypeptide is Large ribosomal subunit protein uL5 (Neorickettsia sennetsu (strain ATCC VR-367 / Miyayama) (Ehrlichia sennetsu)).